The chain runs to 254 residues: Thiamine thiazole synthase (254 aa).

NAD(+)-binding positions include S36, 55 to 56, G63, V127, and 154 to 156; these read EK and HVD. Residues D156 and H171 each contribute to the Fe cation site. M219 lines the NAD(+) pocket. R229 provides a ligand contact to glycine.

This sequence belongs to the THI4 family. Homooctamer; tetramer of dimers. Fe(2+) serves as cofactor.

The enzyme catalyses hydrogen sulfide + glycine + NAD(+) = ADP-5-ethyl-4-methylthiazole-2-carboxylate + nicotinamide + 3 H2O + H(+). The protein operates within cofactor biosynthesis; thiamine diphosphate biosynthesis. In terms of biological role, involved in the biosynthesis of the thiazole moiety of thiamine. Catalyzes the conversion of NAD and glycine to adenosine diphosphate 5-(2-hydroxyethyl)-4-methylthiazole-2-carboxylate (ADT), an adenylated thiazole intermediate, using free sulfide as a source of sulfur. The sequence is that of Thiamine thiazole synthase from Methanoculleus marisnigri (strain ATCC 35101 / DSM 1498 / JR1).